Here is a 622-residue protein sequence, read N- to C-terminus: Iron transport multicopper oxidase fio1 (622 aa).

The N-terminal stretch at 1–22 is a signal peptide; sequence MNKFFSFPILGLLLTCVRFVVA. Residues 23 to 553 are Extracellular-facing; it reads KERLFEWNVT…GEMPAGWTSK (531 aa). 2 N-linked (GlcNAc...) asparagine glycosylation sites follow: asparagine 30 and asparagine 79. Plastocyanin-like domains follow at residues 49 to 147 and 194 to 304; these read IGVN…FIIN and TGLF…LSYN. Cu cation contacts are provided by histidine 85 and histidine 87. 2 N-linked (GlcNAc...) asparagine glycosylation sites follow: asparagine 117 and asparagine 123. Residues histidine 129 and histidine 131 each contribute to the Cu cation site. N-linked (GlcNAc...) asparagine glycosylation is found at asparagine 198, asparagine 202, asparagine 234, asparagine 269, asparagine 296, asparagine 338, asparagine 360, and asparagine 376. The Plastocyanin-like 3 domain maps to 386–498; the sequence is EPVTYGPYTN…SGLLATFIEA (113 aa). Histidine 417, histidine 420, histidine 422, histidine 480, cysteine 481, histidine 482, and histidine 486 together coordinate Cu cation. N-linked (GlcNAc...) asparagine glycosylation occurs at asparagine 532. Residues 554–574 traverse the membrane as a helical segment; that stretch reads AIGTMAACVISACIGMGSIIF. The Cytoplasmic segment spans residues 575–622; it reads YGASIHPVPTEELDENDDLQEAALENAAMFLDTDKAVEKVVEGKDEIK.

Belongs to the multicopper oxidase family. Cu cation is required as a cofactor.

It localises to the cell membrane. Functionally, could be an iron transport multicopper oxidase, which is required for Fe(2+) high affinity uptake. May be required to oxidize Fe(2+) and release it from the transporter. Essential component of copper-dependent iron transport. The chain is Iron transport multicopper oxidase fio1 (fio1) from Schizosaccharomyces pombe (strain 972 / ATCC 24843) (Fission yeast).